A 1736-amino-acid polypeptide reads, in one-letter code: Centrosomal protein of 152 kDa (1736 aa).

The interval 1-60 (MSLEFGSVALQTQNEDEEFDKEDFEREKELQQLLTDLPHDMLDDELSSPERHDSDCSMDG) is interaction with PLK4. The segment at 1–127 (MSLEFGSVAL…SGYSPPGKRE (127 aa)) is disordered. Composition is skewed to basic and acidic residues over residues 61–82 (RAAEPHPSEHLERKWIERDILP) and 94–105 (EENRSKTEDQHL). Coiled coils occupy residues 228-481 (IIQL…AELG), 552-651 (HLVS…QEFD), 692-776 (LEVY…TERQ), 835-868 (AAVSKAEAAAVLAEEQARQVQQEKELATKEALRK), 950-1075 (NVMS…YEED), and 1205-1315 (GHCF…KIKR). The tract at residues 571–592 (FQQSKDGDSGMETKTDTSEKTT) is disordered. A compositionally biased stretch (basic and acidic residues) spans 575-592 (KDGDSGMETKTDTSEKTT). Thr-1277 is modified (phosphothreonine). Disordered stretches follow at residues 1416 to 1479 (GTER…ASTA), 1543 to 1562 (EKNSSPRCISESRHTTLRSP), 1574 to 1614 (GSPT…SDST), and 1677 to 1736 (QQGK…SPLE). The segment covering 1462–1473 (RRLEESKHREMR) has biased composition (basic and acidic residues). Polar residues-rich tracts occupy residues 1576-1595 (PTETDSIASEKSQGVGSQDS) and 1603-1614 (PSSSPAWPSDST). Lys-1714 bears the N6-acetyllysine mark.

This sequence belongs to the CEP152 family. Interacts (via N-terminus) with PLK4; the interaction is mutally exclusive with a PLK4:CEP192 interaction. Interacts (via C-terminus) with CPAP (via-N-terminus). Interacts with CINP. Interacts with CDK5RAP2, WDR62, CEP63 and CEP131. CEP63, CDK5RAP2, CEP152, WDR62 are proposed to form a stepwise assembled complex at the centrosome forming a ring near parental centrioles. Interacts with DEUP1; this interaction recruits CEP152 to the deuterosome. The interactions with CEP63 and DEUP1 are mutually exclusive. Interacts with CCDC66.

Its subcellular location is the cytoplasm. The protein resides in the cytoskeleton. The protein localises to the microtubule organizing center. It localises to the centrosome. It is found in the centriole. In terms of biological role, necessary for centrosome duplication; the function also seems to involve CEP63, CDK5RAP2 and WDR62 through a stepwise assembled complex at the centrosome that recruits CDK2 required for centriole duplication. Acts as a molecular scaffold facilitating the interaction of PLK4 and CPAP, 2 molecules involved in centriole formation. Proposed to snatch PLK4 away from PLK4:CEP92 complexes in early G1 daughter centriole and to reposition PLK4 at the outer boundary of a newly forming CEP152 ring structure. Also plays a key role in deuterosome-mediated centriole amplification in multiciliated that can generate more than 100 centrioles. Overexpression of cep152 can drive amplification of centrioles. This is Centrosomal protein of 152 kDa (Cep152) from Mus musculus (Mouse).